Consider the following 509-residue polypeptide: Histidine ammonia-lyase (509 aa).

A cross-link (5-imidazolinone (Ala-Gly)) is located at residues 142-144 (ASG). 2,3-didehydroalanine (Ser) is present on Ser143.

Belongs to the PAL/histidase family. Post-translationally, contains an active site 4-methylidene-imidazol-5-one (MIO), which is formed autocatalytically by cyclization and dehydration of residues Ala-Ser-Gly.

It localises to the cytoplasm. The enzyme catalyses L-histidine = trans-urocanate + NH4(+). It participates in amino-acid degradation; L-histidine degradation into L-glutamate; N-formimidoyl-L-glutamate from L-histidine: step 1/3. The chain is Histidine ammonia-lyase from Sphingopyxis alaskensis (strain DSM 13593 / LMG 18877 / RB2256) (Sphingomonas alaskensis).